A 448-amino-acid polypeptide reads, in one-letter code: Methylenetetrahydrofolate--tRNA-(uracil-5-)-methyltransferase TrmFO (448 aa).

13-18 is an FAD binding site; it reads GAGLAG.

The protein belongs to the MnmG family. TrmFO subfamily. The cofactor is FAD.

The protein localises to the cytoplasm. It carries out the reaction uridine(54) in tRNA + (6R)-5,10-methylene-5,6,7,8-tetrahydrofolate + NADH + H(+) = 5-methyluridine(54) in tRNA + (6S)-5,6,7,8-tetrahydrofolate + NAD(+). The enzyme catalyses uridine(54) in tRNA + (6R)-5,10-methylene-5,6,7,8-tetrahydrofolate + NADPH + H(+) = 5-methyluridine(54) in tRNA + (6S)-5,6,7,8-tetrahydrofolate + NADP(+). Catalyzes the folate-dependent formation of 5-methyl-uridine at position 54 (M-5-U54) in all tRNAs. In Streptococcus pyogenes serotype M18 (strain MGAS8232), this protein is Methylenetetrahydrofolate--tRNA-(uracil-5-)-methyltransferase TrmFO.